A 345-amino-acid polypeptide reads, in one-letter code: Tropomodulin-4 (345 aa).

Disordered stretches follow at residues 40–64 and 326–345; these read PENM…GPLD and ARAA…QKKR. Positions 336–345 are enriched in basic and acidic residues; that stretch reads NELRRQQKKR.

It belongs to the tropomodulin family. In terms of assembly, binds to the N-terminus of tropomyosin and to actin.

The protein resides in the cytoplasm. The protein localises to the cytoskeleton. Blocks the elongation and depolymerization of the actin filaments at the pointed end. The Tmod/TM complex contributes to the formation of the short actin protofilament, which in turn defines the geometry of the membrane skeleton. This Mus musculus (Mouse) protein is Tropomodulin-4 (Tmod4).